Here is a 302-residue protein sequence, read N- to C-terminus: Acetylglutamate kinase (302 aa).

Residues Gly-73–Gly-74, Arg-95, and Asn-200 contribute to the substrate site.

This sequence belongs to the acetylglutamate kinase family. ArgB subfamily.

It is found in the cytoplasm. It carries out the reaction N-acetyl-L-glutamate + ATP = N-acetyl-L-glutamyl 5-phosphate + ADP. It functions in the pathway amino-acid biosynthesis; L-arginine biosynthesis; N(2)-acetyl-L-ornithine from L-glutamate: step 2/4. In terms of biological role, catalyzes the ATP-dependent phosphorylation of N-acetyl-L-glutamate. This Sphingopyxis alaskensis (strain DSM 13593 / LMG 18877 / RB2256) (Sphingomonas alaskensis) protein is Acetylglutamate kinase.